We begin with the raw amino-acid sequence, 292 residues long: 4-diphosphocytidyl-2-C-methyl-D-erythritol kinase (292 aa).

Lys-10 is a catalytic residue. An ATP-binding site is contributed by 94-104 (PVAAGLAGGSS). The active site involves Asp-136.

It belongs to the GHMP kinase family. IspE subfamily.

It carries out the reaction 4-CDP-2-C-methyl-D-erythritol + ATP = 4-CDP-2-C-methyl-D-erythritol 2-phosphate + ADP + H(+). Its pathway is isoprenoid biosynthesis; isopentenyl diphosphate biosynthesis via DXP pathway; isopentenyl diphosphate from 1-deoxy-D-xylulose 5-phosphate: step 3/6. Its function is as follows. Catalyzes the phosphorylation of the position 2 hydroxy group of 4-diphosphocytidyl-2C-methyl-D-erythritol. This is 4-diphosphocytidyl-2-C-methyl-D-erythritol kinase from Brevibacillus brevis (strain 47 / JCM 6285 / NBRC 100599).